Reading from the N-terminus, the 93-residue chain is Small ribosomal subunit protein uS19 (93 aa).

It belongs to the universal ribosomal protein uS19 family.

In terms of biological role, protein S19 forms a complex with S13 that binds strongly to the 16S ribosomal RNA. The sequence is that of Small ribosomal subunit protein uS19 from Citrifermentans bemidjiense (strain ATCC BAA-1014 / DSM 16622 / JCM 12645 / Bem) (Geobacter bemidjiensis).